A 142-amino-acid polypeptide reads, in one-letter code: Peptide methionine sulfoxide reductase MsrB (142 aa).

The 124-residue stretch at Ile2–Tyr125 folds into the MsrB domain. Cys114 acts as the Nucleophile in catalysis.

Belongs to the MsrB Met sulfoxide reductase family.

The catalysed reaction is L-methionyl-[protein] + [thioredoxin]-disulfide + H2O = L-methionyl-(R)-S-oxide-[protein] + [thioredoxin]-dithiol. This Staphylococcus saprophyticus subsp. saprophyticus (strain ATCC 15305 / DSM 20229 / NCIMB 8711 / NCTC 7292 / S-41) protein is Peptide methionine sulfoxide reductase MsrB.